The following is a 146-amino-acid chain: Phosphoribosyl-AMP cyclohydrolase (146 aa).

D95 serves as a coordination point for Mg(2+). C96 is a Zn(2+) binding site. Positions 97 and 99 each coordinate Mg(2+). Zn(2+) contacts are provided by C112 and C119.

This sequence belongs to the PRA-CH family. In terms of assembly, homodimer. Mg(2+) serves as cofactor. Zn(2+) is required as a cofactor.

It is found in the cytoplasm. The catalysed reaction is 1-(5-phospho-beta-D-ribosyl)-5'-AMP + H2O = 1-(5-phospho-beta-D-ribosyl)-5-[(5-phospho-beta-D-ribosylamino)methylideneamino]imidazole-4-carboxamide. The protein operates within amino-acid biosynthesis; L-histidine biosynthesis; L-histidine from 5-phospho-alpha-D-ribose 1-diphosphate: step 3/9. Functionally, catalyzes the hydrolysis of the adenine ring of phosphoribosyl-AMP. In Chromohalobacter salexigens (strain ATCC BAA-138 / DSM 3043 / CIP 106854 / NCIMB 13768 / 1H11), this protein is Phosphoribosyl-AMP cyclohydrolase.